The sequence spans 211 residues: RING finger protein 222 (211 aa).

The segment at 14-65 adopts an RING-type zinc-finger fold; sequence CPVCYEKFRDLDGASRTLSCGHVFCHDCLVKYLLSTRVDGQVQRTIVCPICR. The helical transmembrane segment at 187-207 threads the bilayer; sequence LITLIAVVAVVAAILPWVLLV.

Its subcellular location is the membrane. This Mus musculus (Mouse) protein is RING finger protein 222 (Rnf222).